The primary structure comprises 399 residues: Serine/threonine-protein kinase PKZ1 (399 aa).

Residues 30–50 (PMQCAYQTQSHSNPEGAKRGR) are disordered. The Protein kinase domain maps to 92 to 371 (WQLFDQIGAG…ADQMLQHPWM (280 aa)). Residues 98–106 (IGAGAFGVV) and K121 contribute to the ATP site. Catalysis depends on D219, which acts as the Proton acceptor.

It belongs to the protein kinase superfamily. CAMK Ser/Thr protein kinase family. Interacts with BZP1.

It carries out the reaction L-seryl-[protein] + ATP = O-phospho-L-seryl-[protein] + ADP + H(+). The catalysed reaction is L-threonyl-[protein] + ATP = O-phospho-L-threonyl-[protein] + ADP + H(+). Functionally, may regulate an early stage of the zoospore pathway. The protein is Serine/threonine-protein kinase PKZ1 of Phytophthora infestans (Potato late blight agent).